The chain runs to 896 residues: Pentatricopeptide repeat-containing protein At5g03800 (896 aa).

17 PPR repeats span residues 113-143 (KTRLGNALISTYLKLGFPREAILVFVSLSSP), 144-178 (TVVSYTALISGFSRLNLEIEALKVFFRMRKAGLVQ), 180-214 (NEYTFVAILTACVRVSRFSLGIQIHGLIVKSGFLN), 215-247 (SVFVSNSLMSLYDKDSGSSCDDVLKLFDEIPQR), 248-278 (DVASWNTVVSSLVKEGKSHKAFDLFYEMNRV), 284-318 (DSFTLSTLLSSCTDSSVLLRGRELHGRAIRIGLMQ), 319-349 (ELSVNNALIGFYSKFWDMKKVESLYEMMMAQ), 350-380 (DAVTFTEMITAYMSFGMVDSAVEIFANVTEK), 381-415 (NTITYNALMAGFCRNGHGLKALKLFTDMLQRGVEL), 416-450 (TDFSLTSAVDACGLVSEKKVSEQIHGFCIKFGTAF), 451-481 (NPCIQTALLDMCTRCERMADAEEMFDQWPSN), 484-519 (SSKATTSIIGGYARNGLPDKAVSLFHRTLCEQKLFL), 520-554 (DEVSLTLILAVCGTLGFREMGYQIHCYALKAGYFS), 555-585 (DISLGNSLISMYAKCCDSDDAIKIFNTMREH), 586-620 (DVISWNSLISCYILQRNGDEALALWSRMNEKEIKP), 621-653 (DIITLTLVISAFRYTESNKLSSCRDLFLSMKTI), and 659-689 (TTEHYTAFVRVLGHWGLLEEAEDTINSMPVQ). Positions 694–769 (VLRALLDSCR…HPAKSWIIHE (76 aa)) are type E motif. The tract at residues 770-800 (NKIHSFHARDTSHPQEKDIYRGLEILIMECL) is type E(+) motif. The tract at residues 801–896 (KVGYEPNTEY…NGKCSCRDLW (96 aa)) is type DYW motif.

The protein belongs to the PPR family. PCMP-H subfamily.

In terms of biological role, may play a role in embryogenesis. The sequence is that of Pentatricopeptide repeat-containing protein At5g03800 (EMB175) from Arabidopsis thaliana (Mouse-ear cress).